Here is a 233-residue protein sequence, read N- to C-terminus: Orotidine 5'-phosphate decarboxylase (233 aa).

Substrate contacts are provided by residues Asp-13, Lys-35, 62-71 (DLKFHDIPNT), Thr-122, Arg-182, Gln-191, Gly-211, and Arg-212. The active-site Proton donor is Lys-64.

It belongs to the OMP decarboxylase family. Type 1 subfamily. Homodimer.

It catalyses the reaction orotidine 5'-phosphate + H(+) = UMP + CO2. It functions in the pathway pyrimidine metabolism; UMP biosynthesis via de novo pathway; UMP from orotate: step 2/2. Catalyzes the decarboxylation of orotidine 5'-monophosphate (OMP) to uridine 5'-monophosphate (UMP). The sequence is that of Orotidine 5'-phosphate decarboxylase from Pseudomonas putida (strain W619).